The sequence spans 767 residues: DNA topoisomerase 1 (767 aa).

The segment covering 1–23 (MSGDHLHNDSQIEADFRLNDSHK) has biased composition (basic and acidic residues). The disordered stretch occupies residues 1–201 (MSGDHLHNDS…NKKKKPKKEE (201 aa)). N-acetylserine is present on serine 2. A phosphoserine mark is found at serine 2 and serine 10. Residues 24–39 (HKDKHKDREHRHKEHK) show a composition bias toward basic residues. Over residues 40 to 110 (KDKEKDREKS…DAKIKKEKEN (71 aa)) the composition is skewed to basic and acidic residues. Serine 59 is modified (phosphoserine). Lysine 103 is covalently cross-linked (Glycyl lysine isopeptide (Lys-Gly) (interchain with G-Cter in SUMO2)). Lysine 105 participates in a covalent cross-link: Glycyl lysine isopeptide (Lys-Gly) (interchain with G-Cter in SUMO); alternate. A Glycyl lysine isopeptide (Lys-Gly) (interchain with G-Cter in SUMO2); alternate cross-link involves residue lysine 105. A Phosphoserine modification is found at serine 114. Lysine 119 is covalently cross-linked (Glycyl lysine isopeptide (Lys-Gly) (interchain with G-Cter in SUMO); alternate). Residue lysine 119 forms a Glycyl lysine isopeptide (Lys-Gly) (interchain with G-Cter in SUMO2); alternate linkage. A Glycyl lysine isopeptide (Lys-Gly) (interchain with G-Cter in SUMO1); alternate cross-link involves residue lysine 119. Positions 131–168 (PKEDIKPLKRPRDEDDADYKPKKIKTEDIKKEKKRKLE) are enriched in basic and acidic residues. Residues lysine 136 and lysine 150 each participate in a glycyl lysine isopeptide (Lys-Gly) (interchain with G-Cter in SUMO2) cross-link. Lysine 155 participates in a covalent cross-link: Glycyl lysine isopeptide (Lys-Gly) (interchain with G-Cter in SUMO); alternate. Residue lysine 155 forms a Glycyl lysine isopeptide (Lys-Gly) (interchain with G-Cter in SUMO2); alternate linkage. Glycyl lysine isopeptide (Lys-Gly) (interchain with G-Cter in SUMO2) cross-links involve residues lysine 160 and lysine 166. A Glycyl lysine isopeptide (Lys-Gly) (interchain with G-Cter in SUMO2); alternate cross-link involves residue lysine 174. Lysine 174 carries the N6-acetyllysine; alternate modification. The span at 181-201 (KDKDKKVPEPDNKKKKPKKEE) shows a compositional bias: basic and acidic residues. Lysine 206 participates in a covalent cross-link: Glycyl lysine isopeptide (Lys-Gly) (interchain with G-Cter in SUMO2). Lysine 282 carries the post-translational modification N6-acetyllysine. Lysine 338 participates in a covalent cross-link: Glycyl lysine isopeptide (Lys-Gly) (interchain with G-Cter in SUMO2). Interaction with DNA stretches follow at residues 427–428 (KY) and 490–495 (RAGNEK). One can recognise a Topo IB-type catalytic domain in the interval 434–767 (SSRIKGEKDW…IDMADEDYEF (334 aa)). Serine 508 carries the phosphoserine; by CK2 modification. Residue lysine 551 forms a Glycyl lysine isopeptide (Lys-Gly) (interchain with G-Cter in SUMO2) linkage. An interaction with DNA region spans residues 587 to 589 (TAK). Glycyl lysine isopeptide (Lys-Gly) (interchain with G-Cter in SUMO2) cross-links involve residues lysine 644, lysine 702, and lysine 714. Tyrosine 725 (O-(3'-phospho-DNA)-tyrosine intermediate) is an active-site residue.

This sequence belongs to the type IB topoisomerase family. In terms of assembly, monomer. Interacts with ERCC6. Interacts with TPRN; TPRN interacts with a number of DNA damage response proteins, is recruited to sites of DNA damage and may play a role in DNA damage repair. In terms of processing, sumoylated. Lys-119 is the main site of sumoylation. Sumoylation plays a role in partitioning TOP1 between nucleoli and nucleoplasm. Levels are dramatically increased on camptothecin (CPT) treatment. Phosphorylation at Ser-508 by CK2 increases binding to supercoiled DNA and sensitivity to camptothecin.

Its subcellular location is the nucleus. It is found in the nucleolus. The protein localises to the nucleoplasm. The catalysed reaction is ATP-independent breakage of single-stranded DNA, followed by passage and rejoining.. Specifically inhibited by camptothecin (CPT), a plant alkaloid with antitumor activity. Functionally, releases the supercoiling and torsional tension of DNA introduced during the DNA replication and transcription by transiently cleaving and rejoining one strand of the DNA duplex. Introduces a single-strand break via transesterification at a target site in duplex DNA. The scissile phosphodiester is attacked by the catalytic tyrosine of the enzyme, resulting in the formation of a DNA-(3'-phosphotyrosyl)-enzyme intermediate and the expulsion of a 5'-OH DNA strand. The free DNA strand then rotates around the intact phosphodiester bond on the opposing strand, thus removing DNA supercoils. Finally, in the religation step, the DNA 5'-OH attacks the covalent intermediate to expel the active-site tyrosine and restore the DNA phosphodiester backbone. Regulates the alternative splicing of tissue factor (F3) pre-mRNA in endothelial cells. Involved in the circadian transcription of the core circadian clock component BMAL1 by altering the chromatin structure around the ROR response elements (ROREs) on the BMAL1 promoter. This chain is DNA topoisomerase 1 (TOP1), found in Chlorocebus aethiops (Green monkey).